A 243-amino-acid chain; its full sequence is 7-carboxy-7-deazaguanine synthase (243 aa).

Substrate is bound by residues 15 to 17 (IQG) and arginine 30. One can recognise a Radical SAM core domain in the interval 21 to 239 (VIGQKTMFVR…PQLHTLLWGN (219 aa)). Cysteine 34, cysteine 38, and cysteine 41 together coordinate [4Fe-4S] cluster. Serine 43 provides a ligand contact to Mg(2+). Substrate is bound at residue serine 81. S-adenosyl-L-methionine contacts are provided by residues glycine 83 and 127-129 (SPK).

It belongs to the radical SAM superfamily. 7-carboxy-7-deazaguanine synthase family. As to quaternary structure, homodimer. [4Fe-4S] cluster serves as cofactor. Requires S-adenosyl-L-methionine as cofactor. The cofactor is Mg(2+).

The catalysed reaction is 6-carboxy-5,6,7,8-tetrahydropterin + H(+) = 7-carboxy-7-deazaguanine + NH4(+). It participates in purine metabolism; 7-cyano-7-deazaguanine biosynthesis. Its function is as follows. Catalyzes the complex heterocyclic radical-mediated conversion of 6-carboxy-5,6,7,8-tetrahydropterin (CPH4) to 7-carboxy-7-deazaguanine (CDG), a step common to the biosynthetic pathways of all 7-deazapurine-containing compounds. The sequence is that of 7-carboxy-7-deazaguanine synthase from Bacillus subtilis (strain 168).